We begin with the raw amino-acid sequence, 158 residues long: Toxin Tse2 (158 aa).

Forms a heterotetramer with Tsi2 consisting of two Tse2 dimers and two Tsi2 dimers. Formation of the complex inactivates Tse2 enzymatic activity.

The protein resides in the secreted. Functionally, toxin secreted by the H1 type VI (H1-T6SS) secretion system into the cytoplasm of recipient cells. Acts likely as a NAD-dependent cytotoxin towards both prokaryotic and eukaryotic cells. This Pseudomonas aeruginosa (strain ATCC 15692 / DSM 22644 / CIP 104116 / JCM 14847 / LMG 12228 / 1C / PRS 101 / PAO1) protein is Toxin Tse2.